A 180-amino-acid chain; its full sequence is uncharacterized protein (180 aa).

Positions Met-1 to Val-180 constitute a Macro domain.

This is an uncharacterized protein from Thermococcus kodakarensis (strain ATCC BAA-918 / JCM 12380 / KOD1) (Pyrococcus kodakaraensis (strain KOD1)).